The chain runs to 102 residues: FGSLLGVCLITQILTGLFLAMHYTADIYFAFSSVAHICRDVNYGWLIRNIHTNGASLFFICIYMHIGRGIYHGSFMLKETWNIGVILFLMTMATAFMGYVFP.

3 helical membrane passes run 1 to 21, 45 to 66, and 81 to 101; these read FGSL…FLAM, WLIR…YMHI, and WNIG…GYVF. The heme b site is built by H51 and H65.

The protein belongs to the cytochrome b family. In terms of assembly, the cytochrome bc1 complex contains 3 respiratory subunits (MT-CYB, CYC1 and UQCRFS1), 2 core proteins (UQCRC1 and UQCRC2) and probably 6 low-molecular weight proteins. Heme b is required as a cofactor.

The protein localises to the mitochondrion inner membrane. In terms of biological role, component of the ubiquinol-cytochrome c reductase complex (complex III or cytochrome b-c1 complex) that is part of the mitochondrial respiratory chain. The b-c1 complex mediates electron transfer from ubiquinol to cytochrome c. Contributes to the generation of a proton gradient across the mitochondrial membrane that is then used for ATP synthesis. The sequence is that of Cytochrome b (mt-cyb) from Plethodon yonahlossee (Yonahlossee salamander).